The chain runs to 178 residues: Inner membrane-spanning protein YciB (178 aa).

The next 5 membrane-spanning stretches (helical) occupy residues 22-42, 50-70, 76-96, 121-141, and 149-169; these read IFWA…YSWY, MTLV…YFHN, WKVT…QWVM, IAWA…AFWL, and FKVF…GVYI.

Belongs to the YciB family.

Its subcellular location is the cell inner membrane. In terms of biological role, plays a role in cell envelope biogenesis, maintenance of cell envelope integrity and membrane homeostasis. The polypeptide is Inner membrane-spanning protein YciB (Cronobacter sakazakii (strain ATCC BAA-894) (Enterobacter sakazakii)).